A 317-amino-acid chain; its full sequence is Inositol oxygenase 2 (317 aa).

Substrate is bound by residues arginine 57 and 115-117 (DES). Fe cation contacts are provided by histidine 128, histidine 153, and aspartate 154. Residues lysine 157 and 174–175 (GD) contribute to the substrate site. Histidine 226, histidine 252, and aspartate 285 together coordinate Fe cation. Residue 252-253 (HS) participates in substrate binding.

This sequence belongs to the myo-inositol oxygenase family. It depends on Fe cation as a cofactor. In terms of tissue distribution, expressed mainly in roots, stems, flowers and siliques. Low expression in leaves.

Its subcellular location is the cytoplasm. It catalyses the reaction myo-inositol + O2 = D-glucuronate + H2O + H(+). It participates in polyol metabolism; myo-inositol degradation into D-glucuronate; D-glucuronate from myo-inositol: step 1/1. Its function is as follows. Involved in the biosynthesis of UDP-glucuronic acid (UDP-GlcA), providing nucleotide sugars for cell-wall polymers. May be also involved in plant ascorbate biosynthesis. The sequence is that of Inositol oxygenase 2 (MIOX2) from Arabidopsis thaliana (Mouse-ear cress).